The sequence spans 174 residues: Endoribonuclease YbeY (174 aa).

Positions 129, 133, and 139 each coordinate Zn(2+).

It belongs to the endoribonuclease YbeY family. It depends on Zn(2+) as a cofactor.

It localises to the cytoplasm. In terms of biological role, single strand-specific metallo-endoribonuclease involved in late-stage 70S ribosome quality control and in maturation of the 3' terminus of the 16S rRNA. The polypeptide is Endoribonuclease YbeY (Lactobacillus helveticus (strain DPC 4571)).